The chain runs to 383 residues: MGFIYARKLLLCMAVSIYAIGSTTTTETTTSSSSTSGSGQSTSSGTTNSSSSPTTSPPTTSSSPPTSTHTSSPSTANAQKHAGHHRGRAGGRRGSPQGGSHTTPHPDRLTPSPDDTYDDDTNHPNGRNNSIEIVPQLPPDRPIIELGVATLRKNFMEASCTVETNSDLAIFWKIGKPSVDAFNRGTTHTRLMRNGVPVYALVSTLRVPWLNVIPLTKITCAACPTNLVAGDGVDLNSCTTKSTTIPCPGQQRTHIFFSAKGDRAVCITSELVSQPTITWSVGSDRLRNDGFSQTWYGIQPGVCGILRSEVRIHRTTWRFGSTSKDYLCEVSASDSKTSDYKVLPNAHSTSNFALVAATTLTVTILCLLCCLYCMLTRPRASVY.

Residues 1–25 (MGFIYARKLLLCMAVSIYAIGSTTT) form the signal peptide. Low complexity predominate over residues 24-75 (TTTETTTSSSSTSGSGQSTSSGTTNSSSSPTTSPPTTSSSPPTSTHTSSPST). A disordered region spans residues 24–136 (TTTETTTSSS…RNNSIEIVPQ (113 aa)). N-linked (GlcNAc...) asparagine; by host glycosylation occurs at asparagine 48. Basic residues predominate over residues 81 to 91 (HAGHHRGRAGG). Residue asparagine 128 is glycosylated (N-linked (GlcNAc...) asparagine; by host). Residues 354-371 (LVAATTLTVTILCLLCCL) traverse the membrane as a helical segment.

It is found in the virion membrane. Its function is as follows. The glycoprotein gp2 from the avirulent strain Kentucky A (KyA) is probably non functional since this strain harbors an in-frame deletion of 1,242 nucleotides in gene 71. The protein is Glycoprotein gp2 (US4) of Equus caballus (Horse).